The following is a 1102-amino-acid chain: Centrosomal protein of 128 kDa (1102 aa).

Phosphoserine is present on residues serine 31, serine 248, and serine 290. 2 coiled-coil regions span residues 215-822 and 878-959; these read VSDR…LETE and EELK…ALQM. The tract at residues 326–346 is disordered; that stretch reads QHQVPCISKQPLSHQDDQGDD. Disordered regions lie at residues 991-1048 and 1070-1102; these read SEKT…DHSR and DPASIEGDTTSLPANGTSPQSKKEEHEIKKYKK. A compositionally biased stretch (basic and acidic residues) spans 1009–1027; it reads QQRRDDTKPRIKSFRDDRP. Polar residues-rich tracts occupy residues 1039–1048 and 1076–1089; these read HSSSCQDHSR and GDTTSLPANGTSPQ. Over residues 1090-1102 the composition is skewed to basic and acidic residues; that stretch reads SKKEEHEIKKYKK.

The protein localises to the cytoplasm. It is found in the cytoskeleton. The protein resides in the microtubule organizing center. Its subcellular location is the centrosome. It localises to the centriole. The protein localises to the spindle pole. The polypeptide is Centrosomal protein of 128 kDa (Cep128) (Mus musculus (Mouse)).